Consider the following 194-residue polypeptide: Small ribosomal subunit protein eS7 (194 aa).

It belongs to the eukaryotic ribosomal protein eS7 family.

The sequence is that of Small ribosomal subunit protein eS7 (RpS7) from Drosophila melanogaster (Fruit fly).